We begin with the raw amino-acid sequence, 644 residues long: Pentatricopeptide repeat-containing protein At1g12775, mitochondrial (644 aa).

Residues 1–53 (MVRMMIRRLSSQASRFVQPRLLETGTLRIALINCPNELLFCCERGFSTFSDRN) constitute a mitochondrion transit peptide. PPR repeat units follow at residues 87–121 (TVID…GIAH), 122–156 (SIYT…GYEP), 157–191 (DTVI…GHKP), 192–226 (TLIT…GFQP), 227–261 (NEVT…NIKL), 262–296 (DAVK…GFKA), 297–331 (DIIT…KISP), 332–366 (NVVT…GIAP), 367–401 (NTIT…GCDP), 402–436 (DIMT…GVIA), 437–471 (NTVT…RVRP), 472–506 (DIVS…KMEL), 507–541 (DIGI…GVKL), 542–576 (DARA…GHAP), and 577–611 (DELT…GFPA).

Belongs to the PPR family. P subfamily.

It localises to the mitochondrion. This is Pentatricopeptide repeat-containing protein At1g12775, mitochondrial from Arabidopsis thaliana (Mouse-ear cress).